Here is a 90-residue protein sequence, read N- to C-terminus: Small ribosomal subunit protein uS15 (90 aa).

This sequence belongs to the universal ribosomal protein uS15 family. As to quaternary structure, part of the 30S ribosomal subunit. Forms a bridge to the 50S subunit in the 70S ribosome, contacting the 23S rRNA.

In terms of biological role, one of the primary rRNA binding proteins, it binds directly to 16S rRNA where it helps nucleate assembly of the platform of the 30S subunit by binding and bridging several RNA helices of the 16S rRNA. Forms an intersubunit bridge (bridge B4) with the 23S rRNA of the 50S subunit in the ribosome. The sequence is that of Small ribosomal subunit protein uS15 from Helicobacter pylori (strain P12).